The sequence spans 375 residues: Trichodiene synthase (375 aa).

Belongs to the trichodiene synthase family.

The enzyme catalyses (2E,6E)-farnesyl diphosphate = trichodiene + diphosphate. It participates in sesquiterpene biosynthesis; trichothecene biosynthesis. In terms of biological role, TS is a member of the terpene cyclase group of enzymes. It catalyzes the isomerization and cyclization of farnesyl pyro-phosphate to form trichodiene, the first cyclic intermediate in the biosynthetic pathway for trichothecenes. It serves to branch trichothecene biosynthesis from the isoprenoid pathway. In Fusarium boothii, this protein is Trichodiene synthase (TRI5).